A 967-amino-acid chain; its full sequence is Isoleucine--tRNA ligase (967 aa).

The 'HIGH' region signature appears at 64-74; that stretch reads PYANGNIHIGH. Glu-600 serves as a coordination point for L-isoleucyl-5'-AMP. The short motif at 641-645 is the 'KMSKS' region element; the sequence is KQSKS. Lys-644 is an ATP binding site.

This sequence belongs to the class-I aminoacyl-tRNA synthetase family. IleS type 1 subfamily. Monomer.

It localises to the cytoplasm. The catalysed reaction is tRNA(Ile) + L-isoleucine + ATP = L-isoleucyl-tRNA(Ile) + AMP + diphosphate. Its function is as follows. Catalyzes the attachment of isoleucine to tRNA(Ile). As IleRS can inadvertently accommodate and process structurally similar amino acids such as valine, to avoid such errors it has two additional distinct tRNA(Ile)-dependent editing activities. One activity is designated as 'pretransfer' editing and involves the hydrolysis of activated Val-AMP. The other activity is designated 'posttransfer' editing and involves deacylation of mischarged Val-tRNA(Ile). In Agrobacterium fabrum (strain C58 / ATCC 33970) (Agrobacterium tumefaciens (strain C58)), this protein is Isoleucine--tRNA ligase.